The primary structure comprises 326 residues: Type II methyltransferase M.EcoRI (326 aa).

Belongs to the N(4)/N(6)-methyltransferase family. Monomer.

The enzyme catalyses a 2'-deoxyadenosine in DNA + S-adenosyl-L-methionine = an N(6)-methyl-2'-deoxyadenosine in DNA + S-adenosyl-L-homocysteine + H(+). In terms of biological role, a methylase that recognizes the double-stranded sequence 5'-GAATTC-3', methylates A-3 on both strands, and protects the DNA from cleavage by the EcoRI endonuclease. The chain is Type II methyltransferase M.EcoRI (ecoRIM) from Escherichia coli.